The primary structure comprises 100 residues: uncharacterized protein (100 aa).

2 helical membrane-spanning segments follow: residues 30–50 and 69–89; these read FHIP…PLAF and FLLI…LPFF.

It is found in the cytoplasm. The protein localises to the nucleus membrane. This is an uncharacterized protein from Schizosaccharomyces pombe (strain 972 / ATCC 24843) (Fission yeast).